Consider the following 183-residue polypeptide: ADP-ribosylation factor-like protein 1 (183 aa).

Gly-2 carries the N-myristoyl glycine lipid modification. GTP contacts are provided by residues 25 to 32 (GLDGAGKT), 68 to 72 (DLGGQ), and 127 to 130 (NKQD).

This sequence belongs to the small GTPase superfamily. Arf family. In terms of assembly, homodimer. Interacts with IMH1 (via GRIP domain); the interaction is dependent on GTP. Interacts with MON2.

The protein resides in the golgi apparatus. Recruits golgins such as IMH1 to the Golgi. Can bind and hydrolyze GTP. May be involved in trafficking events within the endosomal system. This Saccharomyces cerevisiae (strain ATCC 204508 / S288c) (Baker's yeast) protein is ADP-ribosylation factor-like protein 1 (ARL1).